A 312-amino-acid chain; its full sequence is Ribosomal protein L11 methyltransferase (312 aa).

S-adenosyl-L-methionine-binding residues include T162, G183, D205, and N248.

It belongs to the methyltransferase superfamily. PrmA family.

It is found in the cytoplasm. The catalysed reaction is L-lysyl-[protein] + 3 S-adenosyl-L-methionine = N(6),N(6),N(6)-trimethyl-L-lysyl-[protein] + 3 S-adenosyl-L-homocysteine + 3 H(+). Functionally, methylates ribosomal protein L11. The chain is Ribosomal protein L11 methyltransferase from Bacillus anthracis (strain A0248).